A 290-amino-acid polypeptide reads, in one-letter code: Elongation factor Ts (290 aa).

The interval threonine 82–valine 85 is involved in Mg(2+) ion dislocation from EF-Tu.

Belongs to the EF-Ts family.

The protein resides in the cytoplasm. Its function is as follows. Associates with the EF-Tu.GDP complex and induces the exchange of GDP to GTP. It remains bound to the aminoacyl-tRNA.EF-Tu.GTP complex up to the GTP hydrolysis stage on the ribosome. This chain is Elongation factor Ts, found in Thiobacillus denitrificans (strain ATCC 25259 / T1).